The primary structure comprises 398 residues: Tryptophan synthase beta chain (398 aa).

N6-(pyridoxal phosphate)lysine is present on lysine 92.

This sequence belongs to the TrpB family. Tetramer of two alpha and two beta chains. It depends on pyridoxal 5'-phosphate as a cofactor.

It catalyses the reaction (1S,2R)-1-C-(indol-3-yl)glycerol 3-phosphate + L-serine = D-glyceraldehyde 3-phosphate + L-tryptophan + H2O. The protein operates within amino-acid biosynthesis; L-tryptophan biosynthesis; L-tryptophan from chorismate: step 5/5. Its function is as follows. The beta subunit is responsible for the synthesis of L-tryptophan from indole and L-serine. This chain is Tryptophan synthase beta chain, found in Nitrosospira multiformis (strain ATCC 25196 / NCIMB 11849 / C 71).